Reading from the N-terminus, the 341-residue chain is Protein BEARSKIN2 (341 aa).

Residues 9–160 form the NAC domain; sequence VPPGFRFHPT…GWVVCRVFMK (152 aa). A DNA-binding region spans residues 109–166; sequence IGMRKTLVFYKGRAPHGQKTDWIMHEYRLEDADDPQANPSEDGWVVCRVFMKKNLFKV.

As to expression, expressed throughout the root cap, in both columella (COL) and lateral root cap (LRC) cells, with higher levels in the COL-adjoining LRC than the upper LRC. Also present at low levels expression in the tips of cotyledons and the cotyledon vasculature, as weel as in vasculature of the first pair of true leaves and at the hydathodes.

The protein localises to the nucleus. Transcription activator. Together with BRN1 and SMB, regulates cellular maturation of root cap. Promotes the expression of genes involved in secondary cell walls (SCW) biosynthesis. The protein is Protein BEARSKIN2 (BRN2) of Arabidopsis thaliana (Mouse-ear cress).